The chain runs to 191 residues: UPF0312 protein PA0423 (191 aa).

An N-terminal signal peptide occupies residues 1–23 (MLKKTLAALALGSALFTAGQAMA).

This sequence belongs to the UPF0312 family. Type 1 subfamily.

It localises to the periplasm. In Pseudomonas aeruginosa (strain ATCC 15692 / DSM 22644 / CIP 104116 / JCM 14847 / LMG 12228 / 1C / PRS 101 / PAO1), this protein is UPF0312 protein PA0423.